The primary structure comprises 311 residues: Glutaminase (311 aa).

Residues serine 69, asparagine 120, glutamate 164, asparagine 171, tyrosine 195, tyrosine 247, and valine 265 each contribute to the substrate site.

Belongs to the glutaminase family. Homotetramer.

It catalyses the reaction L-glutamine + H2O = L-glutamate + NH4(+). In Colwellia psychrerythraea (strain 34H / ATCC BAA-681) (Vibrio psychroerythus), this protein is Glutaminase.